The primary structure comprises 100 residues: Replication restart protein PriB (100 aa).

The SSB domain occupies 1 to 99; sequence MGFNNLVSLA…LRIQNIKEYK (99 aa).

It belongs to the PriB family. As to quaternary structure, homodimer. Interacts with PriA and DnaT. Component of the replication restart primosome. Primosome assembly occurs via a 'hand-off' mechanism. PriA binds to replication forks, subsequently PriB then DnaT bind; DnaT then displaces ssDNA to generate the helicase loading substrate.

Its function is as follows. Involved in the restart of stalled replication forks, which reloads the replicative helicase on sites other than the origin of replication; the PriA-PriB pathway is the major replication restart pathway. During primosome assembly it facilitates complex formation between PriA and DnaT on DNA; stabilizes PriA on DNA. Stimulates the DNA unwinding activity of PriA helicase. This chain is Replication restart protein PriB, found in Neisseria meningitidis serogroup C (strain 053442).